We begin with the raw amino-acid sequence, 515 residues long: 2,3-bisphosphoglycerate-independent phosphoglycerate mutase (515 aa).

Positions 14 and 64 each coordinate Mn(2+). Serine 64 acts as the Phosphoserine intermediate in catalysis. Residues histidine 125, 155-156 (RD), arginine 187, arginine 193, 263-266 (RADR), and lysine 337 each bind substrate. The Mn(2+) site is built by aspartate 404, histidine 408, aspartate 445, histidine 446, and histidine 464.

This sequence belongs to the BPG-independent phosphoglycerate mutase family. Monomer. Mn(2+) serves as cofactor.

It carries out the reaction (2R)-2-phosphoglycerate = (2R)-3-phosphoglycerate. Its pathway is carbohydrate degradation; glycolysis; pyruvate from D-glyceraldehyde 3-phosphate: step 3/5. Catalyzes the interconversion of 2-phosphoglycerate and 3-phosphoglycerate. The sequence is that of 2,3-bisphosphoglycerate-independent phosphoglycerate mutase from Pseudomonas paraeruginosa (strain DSM 24068 / PA7) (Pseudomonas aeruginosa (strain PA7)).